The following is a 361-amino-acid chain: Putative agmatine deiminase (361 aa).

The Amidino-cysteine intermediate role is filled by Cys354.

It belongs to the agmatine deiminase family.

The catalysed reaction is agmatine + H2O = N-carbamoylputrescine + NH4(+). This Streptococcus pneumoniae (strain P1031) protein is Putative agmatine deiminase.